Reading from the N-terminus, the 1121-residue chain is tRNA (34-2'-O)-methyltransferase regulator WDR6 (1121 aa).

Position 1 is an N-acetylmethionine (Met-1). WD repeat units follow at residues 53–97 (IKRV…VVKI), 105–143 (WELW…LYDP), 147–189 (CILQ…VWYP), 200–238 (APDR…IWKV), 247–285 (RVQN…VWSH), 289–327 (ILQA…LWHL), 335–376 (LGVS…LYDV), 381–422 (WEQL…VVPI), 425–470 (PTAA…ISAA), 476–520 (IFVK…LFPS), 559–598 (PVST…FVRD), 604–642 (VLRQ…VWNP), 645–684 (HEKL…LYRA), 739–785 (LTDI…VWGI), 848–893 (RNRH…LFLL), 901–946 (QLLA…FWDL), 970–1012 (GTPS…VFVL), 1036–1073 (EEYS…FWRL), and 1079–1121 (TFMN…NWYD).

The protein belongs to the WD repeat WDR6 family. As to quaternary structure, interacts with FTSJ1; the interaction is direct, and required for 2'-O-methylation of position 34 in substrate tRNAs. Interacts with IRS4. Interacts with STK11/LKB1. In terms of tissue distribution, ubiquitous.

It is found in the cytoplasm. In terms of biological role, together with methyltransferase FTSJ1, methylates the 2'-O-ribose of nucleotides at position 34 of the tRNA anticodon loop of substrate tRNAs. Required for the correct positioning of the substrate tRNA for methylation. Required to suppress amino acid starvation-induced autophagy. Enhances the STK11/LKB1-induced cell growth suppression activity. The polypeptide is tRNA (34-2'-O)-methyltransferase regulator WDR6 (WDR6) (Homo sapiens (Human)).